Here is a 448-residue protein sequence, read N- to C-terminus: MCSPGRAPPGPAPAGDLPPEWETDDERMAFLFSAFKQSREVNSTEWDSKMAFWVGLVLARGRRRGVVRTCLRELQNGFERRGSVPLGLGTVLRELLRRGKMQRESDFMASVDSSWISWGVGVFILKPLKWTLSSVLGDSKVPEEEEVLIYVELLQEKAEEVYRLYQNSVLSSHPVVALSELRSLCAGVCPDERTFYLLLLQLQKEKKVTILEQNGEKIVKFARGLHAKVSPMNDVDIGVYQLMQSEQLLSQKVESLSQEAEKCKDDARSACRAGKKQLALRCLKSKRRTERRIEELHSKLDAVQGILDRIYASQTDQMVFNAYQAGVGALKLSMKDVTVEKAENLVDQIQELCDTQDEVAQTLAGAGVNGLEMDSEELEKELDSLLQDSAKEPVHLHPVPQKDSGFAGAISDAELEAELEKLSVCDGDLAQKTPSASSEPQTALGLNL.

Over residues 1–12 the composition is skewed to pro residues; that stretch reads MCSPGRAPPGPA. The tract at residues 1 to 20 is disordered; the sequence is MCSPGRAPPGPAPAGDLPPE. Positions 241-392 form a coiled coil; it reads QLMQSEQLLS…DSLLQDSAKE (152 aa).

It belongs to the SNF7 family.

Its subcellular location is the cytoplasm. It is found in the nucleus envelope. ESCRT-III-like protein required to recruit the ESCRT-III complex to the nuclear envelope (NE) during late anaphase. Together with SPAST, the ESCRT-III complex promotes NE sealing and mitotic spindle disassembly during late anaphase. Recruited to the reforming NE during anaphase by LEMD2. Plays a role in the endosomal sorting pathway. This chain is Charged multivesicular body protein 7 (CHMP7), found in Gallus gallus (Chicken).